We begin with the raw amino-acid sequence, 249 residues long: 5'-nucleotidase SurE (249 aa).

Positions 8, 9, 39, and 91 each coordinate a divalent metal cation.

It belongs to the SurE nucleotidase family. A divalent metal cation serves as cofactor.

It localises to the cytoplasm. The catalysed reaction is a ribonucleoside 5'-phosphate + H2O = a ribonucleoside + phosphate. Its function is as follows. Nucleotidase that shows phosphatase activity on nucleoside 5'-monophosphates. In Pseudomonas entomophila (strain L48), this protein is 5'-nucleotidase SurE.